An 874-amino-acid polypeptide reads, in one-letter code: Alanine--tRNA ligase (874 aa).

Positions 563, 567, 665, and 669 each coordinate Zn(2+).

Belongs to the class-II aminoacyl-tRNA synthetase family. Zn(2+) is required as a cofactor.

Its subcellular location is the cytoplasm. It carries out the reaction tRNA(Ala) + L-alanine + ATP = L-alanyl-tRNA(Ala) + AMP + diphosphate. Functionally, catalyzes the attachment of alanine to tRNA(Ala) in a two-step reaction: alanine is first activated by ATP to form Ala-AMP and then transferred to the acceptor end of tRNA(Ala). Also edits incorrectly charged Ser-tRNA(Ala) and Gly-tRNA(Ala) via its editing domain. The sequence is that of Alanine--tRNA ligase from Histophilus somni (strain 129Pt) (Haemophilus somnus).